The following is a 1993-amino-acid chain: Otoferlin (1993 aa).

The C2 1 domain occupies 1-98 (MALIVHLKTV…VEENRVEVSD (98 aa)). Residues 1 to 1959 (MALIVHLKTV…IKYLICTRYK (1959 aa)) lie on the Cytoplasmic side of the membrane. Residues 127–212 (PWDDGDFLGD…KEEPQRQDEP (86 aa)) form a disordered region. Over residues 129–145 (DDGDFLGDESLQEEEKD) the composition is skewed to acidic residues. 2 stretches are compositionally biased toward basic and acidic residues: residues 163–186 (PGEK…EHKA) and 202–211 (HKEEPQRQDE). C2 domains lie at 251-372 (KRSK…HKWA) and 415-546 (IEGN…FLPT). The segment at 654–708 (NYGNEVDGTSRPQRPRPRKEPGDEEEVDLIQNSSDDEGDEAGDLASVSSTPPMRP) is disordered. Positions 675–695 (GDEEEVDLIQNSSDDEGDEAG) are enriched in acidic residues. Positions 807 to 836 (RERLKSCMRELESMGQQAKSLRAQVKRHTV) form a coiled coil. C2 domains lie at 959-1084 (LHSF…PPRF) and 1131-1257 (RGPI…ANWN). Ca(2+)-binding residues include D991, D997, D1053, D1055, and D1061. 2 disordered regions span residues 1294–1318 (AEDE…EEPD) and 1339–1398 (LRQH…EKKK). Positions 1348–1357 (DLEEKEEMDS) are enriched in acidic residues. Basic and acidic residues predominate over residues 1366 to 1379 (KNKEKSRAAKEEKK). C2 domains are found at residues 1460-1589 (LPED…ATCG) and 1710-1861 (DMPA…KQCT). Positions 1504, 1510, 1559, 1561, 1567, 1832, 1835, and 1838 each coordinate Ca(2+). The chain crosses the membrane as a helical span at residues 1960–1980 (WLIIKIVLALLGLLMLALFLY). Residues 1981 to 1993 (SLPGYMVKKLLGA) are Extracellular-facing.

The protein belongs to the ferlin family. Interacts with SNAP25; the interaction is direct. Interacts with STX1; the interaction is direct. Interacts with RAB8B. Ca(2+) is required as a cofactor. As to expression, isoform 1 is expressed in the cochlea and brain. Expressed in cerebellum (Purkinje cells), hippocampus (granule cells of the dentate gyrus and in pyramidal cells of the CA1-CA3 region) and cortex (stellate and pyramidal cells). Expressed in hair cells of vestibular organs such as the saccule, utricle and crista ampullari. Expressed in the cochlear inner and outer cells (IHCs and OHCs) (at protein level). Expressed in brain: brainstem, cerebellum (granules cells and Purkinje cell layer), cortex (layers IV and V), inferior colliculus, superior colliculus and hippocampus (granule cells of the dentate gyrus and in pyramidal cells of the CA1-CA3 region).

The protein localises to the cytoplasmic vesicle. It localises to the secretory vesicle. The protein resides in the synaptic vesicle membrane. Its subcellular location is the basolateral cell membrane. It is found in the endoplasmic reticulum membrane. The protein localises to the golgi apparatus membrane. It localises to the presynaptic cell membrane. The protein resides in the cell membrane. In terms of biological role, key calcium ion sensor involved in the Ca(2+)-triggered synaptic vesicle-plasma membrane fusion and in the control of neurotransmitter release at these output synapses. Interacts in a calcium-dependent manner to the presynaptic SNARE proteins at ribbon synapses of cochlear inner hair cells (IHCs) to trigger exocytosis of neurotransmitter. Also essential to synaptic exocytosis in immature outer hair cells (OHCs). May also play a role within the recycling of endosomes. The chain is Otoferlin (Otof) from Rattus norvegicus (Rat).